A 201-amino-acid polypeptide reads, in one-letter code: Recombination protein RecR (201 aa).

A C4-type zinc finger spans residues 58–73 (CGRCGALTDVDPCGIC). A Toprim domain is found at 81-178 (ETLCLVSEWD…RVTRLAQGIP (98 aa)).

Belongs to the RecR family.

Its function is as follows. May play a role in DNA repair. It seems to be involved in an RecBC-independent recombinational process of DNA repair. It may act with RecF and RecO. This Nitratidesulfovibrio vulgaris (strain DSM 19637 / Miyazaki F) (Desulfovibrio vulgaris) protein is Recombination protein RecR.